We begin with the raw amino-acid sequence, 197 residues long: Putative peptidyl-prolyl cis-trans isomerase (197 aa).

The region spanning Gly14–Val195 is the PPIase cyclophilin-type domain.

Belongs to the cyclophilin-type PPIase family.

The enzyme catalyses [protein]-peptidylproline (omega=180) = [protein]-peptidylproline (omega=0). In terms of biological role, PPIases accelerate the folding of proteins. It catalyzes the cis-trans isomerization of proline imidic peptide bonds in oligopeptides. In Staphylococcus aureus (strain bovine RF122 / ET3-1), this protein is Putative peptidyl-prolyl cis-trans isomerase.